The primary structure comprises 91 residues: UPF0250 protein NMC1112 (91 aa).

Belongs to the UPF0250 family.

This is UPF0250 protein NMC1112 from Neisseria meningitidis serogroup C / serotype 2a (strain ATCC 700532 / DSM 15464 / FAM18).